Here is a 79-residue protein sequence, read N- to C-terminus: Three-finger toxin A2 (79 aa).

A signal peptide spans 1 to 21 (MKTLLLTLVVVTIVCLDLGNS). 4 disulfide bridges follow: Cys24-Cys41, Cys34-Cys59, Cys63-Cys71, and Cys72-Cys77.

This sequence belongs to the three-finger toxin family. Short-chain subfamily. Expressed by the venom gland.

It is found in the secreted. This Micrurus laticollaris (Balsas coral snake) protein is Three-finger toxin A2.